Reading from the N-terminus, the 1143-residue chain is Serine/threonine-protein kinase BRI1-like 2 (1143 aa).

Positions 1–31 (MTTSPIRVRIRTRIQISFIFLLTHLSQSSSS) are cleaved as a signal peptide. Residues 32-756 (DQSSLKTDSL…GTRAASWANS (725 aa)) are Extracellular-facing. The Cys pair 1 signature appears at 68–75 (CQFSGVTC). LRR repeat units lie at residues 77–101 (GGRVTEINLSGSGLSGIVSFNAFTS), 102–125 (LDSLSVLKLSENFFVLNSTSLLLL), 126–150 (PLTLTHLELSSSGLIGTLPENFFSK), 151–175 (YSNLISITLSYNNFTGKLPNDLFLS), 177–200 (KKLQTLDLSYNNITGPISGLTIPL), 203–227 (CVSMTYLDFSGNSISGYISDSLINC), 228–250 (TNLKSLNLSYNNFDGQIPKSFGE), 251–275 (LKLLQSLDLSHNRLTGWIPPEIGDT), 277–299 (RSLQNLRLSYNNFTGVIPESLSS), 300–324 (CSWLQSLDLSNNNISGPFPNTILRS), 326–349 (GSLQILLLSNNLISGDFPTSISAC), 351–373 (SLRIADFSSNRFSGVIPPDLCPG), 374–398 (AASLEELRLPDNLVTGEIPPAISQC), 399–422 (SELRTIDLSLNYLNGTIPPEIGNL), 424–446 (KLEQFIAWYNNIAGEIPPEIGKL), 447–470 (QNLKDLILNNNQLTGEIPPEFFNC), 472–493 (NIEWVSFTSNRLTGEVPKDFGI), 494–518 (LSRLAVLQLGNNNFTGEIPPELGKC), 520–542 (TLVWLDLNTNHLTGEIPPRLGRQ), 570–594 (VGGLVEFSGIRPERLLQIPSLKSCD), 610–634 (YQTIEYLDLSYNQLRGKIPDEIGEM), 635–660 (IALQVLELSHNQLSGEIPFTIGQLKN), 662–681 (GVFDASDNRLQGQIPESFSN), and 682–707 (LSFLVQIDLSNNELTGPIPQRGQLST). 2 N-linked (GlcNAc...) asparagine glycosylation sites follow: Asn-84 and Asn-118. 4 N-linked (GlcNAc...) asparagine glycosylation sites follow: Asn-163, Asn-188, Asn-226, and Asn-234. N-linked (GlcNAc...) asparagine glycosylation is found at Asn-288 and Asn-312. Asn-412 carries N-linked (GlcNAc...) asparagine glycosylation. An N-linked (GlcNAc...) asparagine glycan is attached at Asn-469. Asn-506 carries an N-linked (GlcNAc...) asparagine glycan. The N-linked (GlcNAc...) asparagine glycan is linked to Asn-681. Positions 720 to 727 (CGVPLPEC) match the Cys pair 2 motif. Residues 757–777 (IVLGVLISAASVCILIVWAIA) form a helical membrane-spanning segment. The Cytoplasmic portion of the chain corresponds to 778–1143 (VRARRRDADD…NNSHSHSNSL (366 aa)). Thr-835 is subject to Phosphothreonine. One can recognise a Protein kinase domain in the interval 838-1129 (FSAASMIGHG…LQVVASLREL (292 aa)). Residues 844–852 (IGHGGFGEV) and Lys-866 each bind ATP. Position 911 is a phosphotyrosine (Tyr-911). The active-site Proton acceptor is the Asp-966. Ser-1001 is subject to Phosphoserine. Phosphotyrosine is present on Tyr-1009.

It belongs to the protein kinase superfamily. Ser/Thr protein kinase family. As to quaternary structure, interacts with TTL3. As to expression, expressed in provascular and procambial sites throughout plant development. Expressed throughout globe- to heart-staged embryos. Then, it is restricted to procambial cells by the late torpedo stage, and this pattern persists throughout the duration of embryo development. After germination, it is expressed not only in procambial cells throughout the plant but also in all lateral organ primordia before the onset of vascularization.

It is found in the cell membrane. The enzyme catalyses L-seryl-[protein] + ATP = O-phospho-L-seryl-[protein] + ADP + H(+). It carries out the reaction L-threonyl-[protein] + ATP = O-phospho-L-threonyl-[protein] + ADP + H(+). In terms of biological role, receptor with a serine/threonine-protein kinase activity, which may transduce extracellular spatial and temporal signals into downstream cell differentiation responses in provascular and procambial cells. In contrast to BRI1, BRL1 and BRL3, it does not bind brassinolide. In Arabidopsis thaliana (Mouse-ear cress), this protein is Serine/threonine-protein kinase BRI1-like 2.